We begin with the raw amino-acid sequence, 438 residues long: Methylenetetrahydrofolate--tRNA-(uracil-5-)-methyltransferase TrmFO (438 aa).

Residue 9-14 (GGGLAG) participates in FAD binding.

It belongs to the MnmG family. TrmFO subfamily. Requires FAD as cofactor.

The protein localises to the cytoplasm. It carries out the reaction uridine(54) in tRNA + (6R)-5,10-methylene-5,6,7,8-tetrahydrofolate + NADH + H(+) = 5-methyluridine(54) in tRNA + (6S)-5,6,7,8-tetrahydrofolate + NAD(+). The enzyme catalyses uridine(54) in tRNA + (6R)-5,10-methylene-5,6,7,8-tetrahydrofolate + NADPH + H(+) = 5-methyluridine(54) in tRNA + (6S)-5,6,7,8-tetrahydrofolate + NADP(+). Its function is as follows. Catalyzes the folate-dependent formation of 5-methyl-uridine at position 54 (M-5-U54) in all tRNAs. This is Methylenetetrahydrofolate--tRNA-(uracil-5-)-methyltransferase TrmFO from Lactobacillus gasseri (strain ATCC 33323 / DSM 20243 / BCRC 14619 / CIP 102991 / JCM 1131 / KCTC 3163 / NCIMB 11718 / NCTC 13722 / AM63).